A 170-amino-acid polypeptide reads, in one-letter code: Peptide deformylase-like (170 aa).

Residue Glu139 is part of the active site.

Belongs to the polypeptide deformylase family.

This is Peptide deformylase-like from Bradyrhizobium diazoefficiens (strain JCM 10833 / BCRC 13528 / IAM 13628 / NBRC 14792 / USDA 110).